The sequence spans 1358 residues: DNA-directed RNA polymerase subunit beta (1358 aa).

It belongs to the RNA polymerase beta chain family. The RNAP catalytic core consists of 2 alpha, 1 beta, 1 beta' and 1 omega subunit. When a sigma factor is associated with the core the holoenzyme is formed, which can initiate transcription.

It catalyses the reaction RNA(n) + a ribonucleoside 5'-triphosphate = RNA(n+1) + diphosphate. Functionally, DNA-dependent RNA polymerase catalyzes the transcription of DNA into RNA using the four ribonucleoside triphosphates as substrates. The polypeptide is DNA-directed RNA polymerase subunit beta (Francisella philomiragia subsp. philomiragia (strain ATCC 25017 / CCUG 19701 / FSC 153 / O#319-036)).